The primary structure comprises 388 residues: Chorismate synthase (388 aa).

NADP(+)-binding residues include Arg39 and Arg45. Residues 130-132 (RSS), 251-252 (NA), Gly296, 311-315 (KPIPT), and Arg337 contribute to the FMN site.

The protein belongs to the chorismate synthase family. Homotetramer. The cofactor is FMNH2.

The enzyme catalyses 5-O-(1-carboxyvinyl)-3-phosphoshikimate = chorismate + phosphate. It participates in metabolic intermediate biosynthesis; chorismate biosynthesis; chorismate from D-erythrose 4-phosphate and phosphoenolpyruvate: step 7/7. In terms of biological role, catalyzes the anti-1,4-elimination of the C-3 phosphate and the C-6 proR hydrogen from 5-enolpyruvylshikimate-3-phosphate (EPSP) to yield chorismate, which is the branch point compound that serves as the starting substrate for the three terminal pathways of aromatic amino acid biosynthesis. This reaction introduces a second double bond into the aromatic ring system. This Streptococcus pyogenes serotype M1 protein is Chorismate synthase.